The primary structure comprises 355 residues: MRCGPKGLNMIVIDGSQGEGGGQILRTALSLSMVTGQPFTIEKIRANRERGGLLRQHLTAVLAAAEISGANVTGAELGSRTLTFAPQRVTPGDYSFAVGTAGSATLVLQTLLPALMLANKPSNVVVEGGTHNMAAPPFDFLAKTFAPIIESMGPKLKLTLDRYGFYPAGGGKITAEIEPVEKLKQLELLDRGEVLQQNAVALLAHLPRHIADRELETASNILGLAPESTRILGTKNSAGPGNALMIEVQTERHTEIFTAFGKVGISAEKVAEEAAVAAAQYVASSAFACEHLADQLLLPIALAGGGSFTAVRQTMHARTNIEIIRLFLPVSFEISEEENCARVALSTRDRAGVSA.

Residues Q109 and 291–295 (HLADQ) each bind ATP. The active-site Tele-AMP-histidine intermediate is the H316.

Belongs to the RNA 3'-terminal cyclase family. Type 1 subfamily.

Its subcellular location is the cytoplasm. It catalyses the reaction a 3'-end 3'-phospho-ribonucleotide-RNA + ATP = a 3'-end 2',3'-cyclophospho-ribonucleotide-RNA + AMP + diphosphate. Catalyzes the conversion of 3'-phosphate to a 2',3'-cyclic phosphodiester at the end of RNA. The mechanism of action of the enzyme occurs in 3 steps: (A) adenylation of the enzyme by ATP; (B) transfer of adenylate to an RNA-N3'P to produce RNA-N3'PP5'A; (C) and attack of the adjacent 2'-hydroxyl on the 3'-phosphorus in the diester linkage to produce the cyclic end product. The biological role of this enzyme is unknown but it is likely to function in some aspects of cellular RNA processing. In Koribacter versatilis (strain Ellin345), this protein is RNA 3'-terminal phosphate cyclase.